The sequence spans 117 residues: uncharacterized protein (117 aa).

The disordered stretch occupies residues 1–20 (METKKLIGKPLQPARPVRHL).

This is an uncharacterized protein from Homo sapiens (Human).